Reading from the N-terminus, the 193-residue chain is uncharacterized protein (193 aa).

Transmembrane regions (helical) follow at residues 40–56 (LYIA…LKLI), 63–79 (AAGL…SSLC), 86–110 (CSGY…IVSC), and 117–138 (FIFP…FQIY). A disordered region spans residues 158–193 (TTTKLSRSSSAPDLSCPSLSTQPTSPNQSLSAYKKY).

The protein belongs to the chlamydial CPn_0442/CT_006/TC_0274 family.

It is found in the cell membrane. This is an uncharacterized protein from Chlamydia muridarum (strain MoPn / Nigg).